The chain runs to 136 residues: 1,4-dihydroxy-2-naphthoyl-CoA hydrolase (136 aa).

The active site involves Asp16.

It belongs to the 4-hydroxybenzoyl-CoA thioesterase family. DHNA-CoA hydrolase subfamily.

It catalyses the reaction 1,4-dihydroxy-2-naphthoyl-CoA + H2O = 1,4-dihydroxy-2-naphthoate + CoA + H(+). Its pathway is cofactor biosynthesis; phylloquinone biosynthesis. The protein operates within quinol/quinone metabolism; 1,4-dihydroxy-2-naphthoate biosynthesis; 1,4-dihydroxy-2-naphthoate from chorismate: step 7/7. Catalyzes the hydrolysis of 1,4-dihydroxy-2-naphthoyl-CoA (DHNA-CoA) to 1,4-dihydroxy-2-naphthoate (DHNA), a reaction involved in phylloquinone (vitamin K1) biosynthesis. In Synechococcus sp. (strain ATCC 27144 / PCC 6301 / SAUG 1402/1) (Anacystis nidulans), this protein is 1,4-dihydroxy-2-naphthoyl-CoA hydrolase.